A 258-amino-acid chain; its full sequence is UPF0246 protein VP0504 (258 aa).

It belongs to the UPF0246 family.

This chain is UPF0246 protein VP0504, found in Vibrio parahaemolyticus serotype O3:K6 (strain RIMD 2210633).